A 505-amino-acid polypeptide reads, in one-letter code: Bile acid-sensitive ion channel (505 aa).

The binds the plasma membrane and stabilizes the channel in the closed state stretch occupies residues 1-30 (MEQTEKSKVYAENGLLEKIKLCLSKKPLPS). The Cytoplasmic segment spans residues 1–61 (MEQTEKSKVY…NIVQNRSKIR (61 aa)). A helical transmembrane segment spans residues 62-82 (RVLWLVVVLGSVSLVTWQIYI). At 83–459 (RLLNYFTWPT…GLFCGASLIT (377 aa)) the chain is on the extracellular side. Intrachain disulfides connect C112-C207, C185-C192, C298-C377, C315-C373, C328-C350, and C330-C342. N147, N163, N178, and N179 each carry an N-linked (GlcNAc...) asparagine glycan. A glycan (N-linked (GlcNAc...) asparagine) is linked at N306. Residues N370, N405, and N421 are each glycosylated (N-linked (GlcNAc...) asparagine). The GAS motif; ion selectivity filter signature appears at 454-456 (GAS). The helical transmembrane segment at 460–480 (IIEIIEYLFTNFYWICIFFLL) threads the bilayer. At 481–505 (KISEMTQWTPPPQNHLGNKNRIEEC) the chain is on the cytoplasmic side.

The protein belongs to the amiloride-sensitive sodium channel (TC 1.A.6) family. ASIC5 subfamily. In terms of assembly, forms homotrimeric channels. Detected in small intestine, duodenum and jejunum. Detected at very low levels in testis and rectum.

It localises to the apical cell membrane. Its subcellular location is the cell membrane. The catalysed reaction is Na(+)(in) = Na(+)(out). It carries out the reaction Li(+)(in) = Li(+)(out). It catalyses the reaction K(+)(in) = K(+)(out). The enzyme catalyses H(+)(in) = H(+)(out). With respect to regulation, inhibited by the diuretic drug amiloride. In terms of biological role, forms bile acid-gated sodium channels and may play a role in bile acid-dependent absorption and secretion by epithelial cells of the bile ducts. Displays high selectivity for sodium ions but can also permit the permeation of other cations. The gating could be indirect and the consequence of alterations of the membrane environment of the channel by bile acids. As a sodium channel of type II unipolar brush cells of the vestibulocerebellum, controlling the electrical activity of these cells, could play a role in motor coordination and balance. The protein is Bile acid-sensitive ion channel of Homo sapiens (Human).